Here is a 497-residue protein sequence, read N- to C-terminus: COP9 signalosome complex subunit 6 (497 aa).

The region spanning 21-162 (VALHPLPILE…LTIYESNLEI (142 aa)) is the MPN domain. 3 disordered regions span residues 230–282 (ATED…KNRD), 324–350 (YLSS…LDQP), and 435–497 (AKNS…RFDH). Over residues 236-246 (SDKPLMKKVVD) the composition is skewed to basic and acidic residues. 2 stretches are compositionally biased toward low complexity: residues 258-272 (SDDA…SSAA) and 333-343 (QQQQQQQQQQQ). Positions 440 to 453 (RREQASHGGGERFN) are enriched in basic and acidic residues. Residues 475 to 488 (VGEGSASGSGGSGP) are compositionally biased toward gly residues.

This sequence belongs to the peptidase M67A family. CSN6 subfamily. Component of the COP9 signalosome (CSN) complex.

Its subcellular location is the cytoplasm. The protein localises to the nucleus. Its function is as follows. Component of the COP9 signalosome (CSN) complex that acts as an regulator of the ubiquitin (Ubl) conjugation pathway by mediating the deneddylation of the cullin subunit of SCF-type E3 ubiquitin-protein ligase complexes. The CSN complex is involved in the regulation of the circadian clock through its control of the stability of the SCF(FWD1) complex. The chain is COP9 signalosome complex subunit 6 (csn-6) from Neurospora crassa (strain ATCC 24698 / 74-OR23-1A / CBS 708.71 / DSM 1257 / FGSC 987).